The chain runs to 101 residues: Small ribosomal subunit protein uS17 (101 aa).

Belongs to the universal ribosomal protein uS17 family. As to quaternary structure, part of the 30S ribosomal subunit.

One of the primary rRNA binding proteins, it binds specifically to the 5'-end of 16S ribosomal RNA. The chain is Small ribosomal subunit protein uS17 from Kosmotoga olearia (strain ATCC BAA-1733 / DSM 21960 / TBF 19.5.1).